We begin with the raw amino-acid sequence, 147 residues long: Flagellar assembly factor FliW (147 aa).

It belongs to the FliW family. Interacts with translational regulator CsrA and flagellin(s).

Its subcellular location is the cytoplasm. Functionally, acts as an anti-CsrA protein, binds CsrA and prevents it from repressing translation of its target genes, one of which is flagellin. Binds to flagellin and participates in the assembly of the flagellum. This is Flagellar assembly factor FliW from Treponema denticola (strain ATCC 35405 / DSM 14222 / CIP 103919 / JCM 8153 / KCTC 15104).